The primary structure comprises 345 residues: Phosphoribosylformylglycinamidine cyclo-ligase (345 aa).

This sequence belongs to the AIR synthase family.

The protein localises to the cytoplasm. It catalyses the reaction 2-formamido-N(1)-(5-O-phospho-beta-D-ribosyl)acetamidine + ATP = 5-amino-1-(5-phospho-beta-D-ribosyl)imidazole + ADP + phosphate + H(+). It functions in the pathway purine metabolism; IMP biosynthesis via de novo pathway; 5-amino-1-(5-phospho-D-ribosyl)imidazole from N(2)-formyl-N(1)-(5-phospho-D-ribosyl)glycinamide: step 2/2. This chain is Phosphoribosylformylglycinamidine cyclo-ligase, found in Shewanella loihica (strain ATCC BAA-1088 / PV-4).